A 244-amino-acid chain; its full sequence is Putative nucleosome assembly protein C36B7.08c (244 aa).

Positions 199-244 (EAMTEEASDEDESVDLEEDEEEEDEEDEEGDEEKQEPPSKKSKKSN) are disordered. Positions 201 to 232 (MTEEASDEDESVDLEEDEEEEDEEDEEGDEEK) are enriched in acidic residues. Position 211 is a phosphoserine (Ser-211).

The protein belongs to the nucleosome assembly protein (NAP) family.

It is found in the nucleus. This chain is Putative nucleosome assembly protein C36B7.08c, found in Schizosaccharomyces pombe (strain 972 / ATCC 24843) (Fission yeast).